A 144-amino-acid polypeptide reads, in one-letter code: Maximins 11/H1 (144 aa).

A signal peptide spans 1-18; that stretch reads MNFKYIVAVSFLIASAYA. Positions 19-43 are excised as a propeptide; sequence RSEENDEQSLSQRDVLEEESLREIR. Asparagine 70 is modified (asparagine amide). A propeptide spanning residues 74-123 is cleaved from the precursor; sequence TAEDHEVMKRLEAVMRDLDSLDYPEEASERETRGFNQEEIANLFTKKEKR. At leucine 143 the chain carries Leucine amide.

This sequence belongs to the bombinin family. As to expression, expressed by the skin glands.

The protein localises to the secreted. In terms of biological role, maximin-11 shows antimicrobial activity against bacteria and against the fungus C.albicans. It has little hemolytic activity. Maximin-H1 shows antibacterial activity against both Gram-positive and Gram-negative bacteria. It also shows antimicrobial activity against the fungus C.albicans. Shows strong hemolytic activity. This chain is Maximins 11/H1, found in Bombina maxima (Giant fire-bellied toad).